Reading from the N-terminus, the 235-residue chain is UPF0502 protein Bcep18194_B0081 (235 aa).

Belongs to the UPF0502 family.

The protein is UPF0502 protein Bcep18194_B0081 of Burkholderia lata (strain ATCC 17760 / DSM 23089 / LMG 22485 / NCIMB 9086 / R18194 / 383).